We begin with the raw amino-acid sequence, 1199 residues long: Transcription initiation factor TFIID subunit 2 (1199 aa).

Disordered stretches follow at residues 1–23 (MPLT…FESP), 1067–1102 (RPST…TKPQ), and 1136–1199 (KEST…SLSD). Over residues 1093 to 1102 (CDSTPTTKPQ) the composition is skewed to polar residues. Residues 1144 to 1171 (SDHHHHHHHEHKKKKKKHKHKHKHKHKH) are compositionally biased toward basic residues. A compositionally biased stretch (polar residues) spans 1182-1199 (TFSSPASGRSIRSPSLSD). A phosphoserine mark is found at Ser1185, Ser1188, Ser1194, Ser1196, and Ser1198.

It belongs to the TAF2 family. As to quaternary structure, component of the TFIID basal transcription factor complex, composed of TATA-box-binding protein TBP, and a number of TBP-associated factors (TAFs), including TAF1, TAF2, TAF3, TAF4, TAF5, TAF6, TAF7, TAF8, TAF9, TAF10, TAF11, TAF12 and TAF13. Interacts with TAF2C1. Component of the TFTC-HAT complex. As to expression, expressed in all tissues tested.

Its subcellular location is the nucleus. Its function is as follows. The TFIID basal transcription factor complex plays a major role in the initiation of RNA polymerase II (Pol II)-dependent transcription. TFIID recognizes and binds promoters with or without a TATA box via its subunit TBP, a TATA-box-binding protein, and promotes assembly of the pre-initiation complex (PIC). The TFIID complex consists of TBP and TBP-associated factors (TAFs), including TAF1, TAF2, TAF3, TAF4, TAF5, TAF6, TAF7, TAF8, TAF9, TAF10, TAF11, TAF12 and TAF13. TAF2 forms a promoter DNA binding subcomplex of TFIID, together with TAF7 and TAF1. This chain is Transcription initiation factor TFIID subunit 2 (TAF2), found in Homo sapiens (Human).